Reading from the N-terminus, the 175-residue chain is Apoptosis regulator Bcl-2 homolog (175 aa).

Residues 75–94 (QVLEDKINWGRIITIIAFCA) carry the BH1 motif. Residues 105-120 (SPQYYDGIISEAITDA) carry the BH2 motif.

Belongs to the Bcl-2 family. In terms of assembly, interacts with host BAX; this interaction inhibits BAX oligomerization and subsequent activation. Interacts with host BAK1.

It is found in the host mitochondrion. In terms of biological role, plays a role in the inhibition of host apoptosis by sequestering and inactivating multiple proapoptotic BCL-2 proteins, including BAK1 and BAX. The polypeptide is Apoptosis regulator Bcl-2 homolog (Vertebrata (FPV)).